Reading from the N-terminus, the 199-residue chain is NAD(P)H quinone oxidoreductase PST3 (199 aa).

Positions valine 5–phenylalanine 193 constitute a Flavodoxin-like domain. FMN-binding positions include serine 11–histidine 15 and isoleucine 111–glycine 165.

This sequence belongs to the WrbA family. FMN is required as a cofactor.

The protein localises to the cell membrane. It carries out the reaction a quinone + NADH + H(+) = a quinol + NAD(+). It catalyses the reaction a quinone + NADPH + H(+) = a quinol + NADP(+). Its function is as follows. Flavodoxin-like protein (FLP) that plays a role in cell wall integrity, oxidative stress protection and virulence. FLPs act as NAD(P)H quinone oxidoreductases. Reduces ubiquinone (coenzyme Q), enabling it to serve as an antioxidant in the membrane. This is NAD(P)H quinone oxidoreductase PST3 from Candida albicans (strain SC5314 / ATCC MYA-2876) (Yeast).